A 249-amino-acid polypeptide reads, in one-letter code: DNA polymerase sliding clamp (249 aa).

It belongs to the PCNA family. In terms of assembly, homotrimer. The subunits circularize to form a toroid; DNA passes through its center. Replication factor C (RFC) is required to load the toroid on the DNA.

Functionally, sliding clamp subunit that acts as a moving platform for DNA processing. Responsible for tethering the catalytic subunit of DNA polymerase and other proteins to DNA during high-speed replication. The sequence is that of DNA polymerase sliding clamp from Thermococcus onnurineus (strain NA1).